Consider the following 857-residue polypeptide: Leucine--tRNA ligase (857 aa).

The 'HIGH' region motif lies at 42–52 (PYPSGTLHMGH). Residues 616 to 620 (KMSKS) carry the 'KMSKS' region motif. Residue Lys619 participates in ATP binding.

Belongs to the class-I aminoacyl-tRNA synthetase family.

The protein resides in the cytoplasm. It catalyses the reaction tRNA(Leu) + L-leucine + ATP = L-leucyl-tRNA(Leu) + AMP + diphosphate. This is Leucine--tRNA ligase from Parasynechococcus marenigrum (strain WH8102).